We begin with the raw amino-acid sequence, 329 residues long: Sulfate/thiosulfate import ATP-binding protein CysA (329 aa).

One can recognise an ABC transporter domain in the interval 3–237 (IEIRNVSKNF…PASDFVYHFL (235 aa)). 35-42 (GPSGCGKT) contacts ATP.

The protein belongs to the ABC transporter superfamily. Sulfate/tungstate importer (TC 3.A.1.6) family. In terms of assembly, the complex is composed of two ATP-binding proteins (CysA), two transmembrane proteins (CysT and CysW) and a solute-binding protein (CysP).

Its subcellular location is the cell inner membrane. It catalyses the reaction sulfate(out) + ATP + H2O = sulfate(in) + ADP + phosphate + H(+). It carries out the reaction thiosulfate(out) + ATP + H2O = thiosulfate(in) + ADP + phosphate + H(+). Functionally, part of the ABC transporter complex CysAWTP involved in sulfate/thiosulfate import. Responsible for energy coupling to the transport system. This is Sulfate/thiosulfate import ATP-binding protein CysA from Pseudomonas aeruginosa (strain ATCC 15692 / DSM 22644 / CIP 104116 / JCM 14847 / LMG 12228 / 1C / PRS 101 / PAO1).